Reading from the N-terminus, the 275-residue chain is Pantothenate synthetase (275 aa).

ATP is bound at residue 26–33 (MGNLHDGH). Catalysis depends on histidine 33, which acts as the Proton donor. Glutamine 57 is a binding site for (R)-pantoate. Glutamine 57 is a binding site for beta-alanine. Position 144–147 (144–147 (GKKD)) interacts with ATP. Glutamine 150 lines the (R)-pantoate pocket. ATP contacts are provided by residues valine 173 and 181–184 (LSSR).

This sequence belongs to the pantothenate synthetase family. In terms of assembly, homodimer.

It is found in the cytoplasm. The catalysed reaction is (R)-pantoate + beta-alanine + ATP = (R)-pantothenate + AMP + diphosphate + H(+). The protein operates within cofactor biosynthesis; (R)-pantothenate biosynthesis; (R)-pantothenate from (R)-pantoate and beta-alanine: step 1/1. Catalyzes the condensation of pantoate with beta-alanine in an ATP-dependent reaction via a pantoyl-adenylate intermediate. This is Pantothenate synthetase from Azoarcus sp. (strain BH72).